The following is a 333-amino-acid chain: T-cell surface glycoprotein CD1b1 (333 aa).

A signal peptide spans Met-1–Asp-17. The Extracellular segment spans residues Thr-18–Gly-302. N-linked (GlcNAc...) asparagine glycosylation is found at Asn-38, Asn-75, and Asn-146. 3 cysteine pairs are disulfide-bonded: Cys-120/Cys-184, Cys-149/Cys-163, and Cys-224/Cys-279. In terms of domain architecture, Ig-like spans Pro-197–Trp-295. The helical transmembrane segment at Trp-303–Phe-323 threads the bilayer. Residues Tyr-324–Leu-333 lie on the Cytoplasmic side of the membrane. An Internalization signal motif is present at residues Tyr-329–Ile-332.

Heterodimer with B2M (beta-2-microglobulin). Interacts with saposin C.

The protein resides in the cell membrane. It localises to the endosome membrane. It is found in the lysosome membrane. In terms of biological role, antigen-presenting protein that binds self and non-self lipid and glycolipid antigens and presents them to T-cell receptors on natural killer T-cells. This is T-cell surface glycoprotein CD1b1 (CD1B1) from Cavia porcellus (Guinea pig).